The primary structure comprises 274 residues: tRNA dimethylallyltransferase (274 aa).

Positions 9–12 are interaction with substrate tRNA; sequence DSLS.

This sequence belongs to the IPP transferase family. In terms of assembly, monomer. The cofactor is Mg(2+).

The enzyme catalyses adenosine(37) in tRNA + dimethylallyl diphosphate = N(6)-dimethylallyladenosine(37) in tRNA + diphosphate. Its function is as follows. Catalyzes the transfer of a dimethylallyl group onto the adenine at position 37 in tRNAs that read codons beginning with uridine, leading to the formation of N6-(dimethylallyl)adenosine (i(6)A). This chain is tRNA dimethylallyltransferase (miaA), found in Helicobacter pylori (strain P12).